The primary structure comprises 468 residues: Probable acid phosphatase DIA3 (468 aa).

An N-terminal signal peptide occupies residues Met-1–Ser-20. His-76 serves as the catalytic Nucleophile. 7 N-linked (GlcNAc...) asparagine glycosylation sites follow: Asn-98, Asn-163, Asn-193, Asn-202, Asn-238, Asn-251, and Asn-316. Catalysis depends on Asp-339, which acts as the Proton donor. N-linked (GlcNAc...) asparagine glycosylation is found at Asn-357, Asn-391, Asn-457, and Asn-462.

Belongs to the histidine acid phosphatase family.

It carries out the reaction a phosphate monoester + H2O = an alcohol + phosphate. This chain is Probable acid phosphatase DIA3 (DIA3), found in Saccharomyces cerevisiae (strain ATCC 204508 / S288c) (Baker's yeast).